The primary structure comprises 269 residues: Hemin import ATP-binding protein HmuV (269 aa).

Residues Ile5–Cys242 form the ABC transporter domain. Gly37 to Ser44 is an ATP binding site.

The protein belongs to the ABC transporter superfamily. Heme (hemin) importer (TC 3.A.1.14.5) family. The complex is composed of two ATP-binding proteins (HmuV), two transmembrane proteins (HmuU) and a solute-binding protein (HmuT).

It is found in the cell inner membrane. Its function is as follows. Part of the ABC transporter complex HmuTUV involved in hemin import. Responsible for energy coupling to the transport system. The polypeptide is Hemin import ATP-binding protein HmuV (Nitrobacter winogradskyi (strain ATCC 25391 / DSM 10237 / CIP 104748 / NCIMB 11846 / Nb-255)).